The sequence spans 181 residues: Large ribosomal subunit protein bL17 (181 aa).

Low complexity predominate over residues Lys141 to Ala159. A disordered region spans residues Lys141 to Asp181. The segment covering Asp171–Asp181 has biased composition (basic and acidic residues).

It belongs to the bacterial ribosomal protein bL17 family. In terms of assembly, part of the 50S ribosomal subunit. Contacts protein L32.

The protein is Large ribosomal subunit protein bL17 of Geotalea daltonii (strain DSM 22248 / JCM 15807 / FRC-32) (Geobacter daltonii).